The chain runs to 160 residues: Major strawberry allergen Fra a 1.08 (160 aa).

Belongs to the BetVI family. Phosphorylated in vivo. Phosphorylation prevents its activity as ribonuclease. In terms of tissue distribution, highly expressed in roots. Expressed a low levels in ripe red fruits.

Its function is as follows. Possesses ribonuclease activity in vitro. The polypeptide is Major strawberry allergen Fra a 1.08 (Fragaria ananassa (Strawberry)).